The chain runs to 369 residues: N-methyltransferase imqF (369 aa).

This sequence belongs to the methyltransferase superfamily.

Its pathway is secondary metabolite biosynthesis. N-methyltransferase; part of the gene cluster that mediates the biosynthesis of imizoquins A to D, tripeptide-derived alkaloids that serve a protective role against oxidative stress that are essential for normal germination. ImqB is a canonical three-module NRPS that assembles the tripeptide backbone of the imizoquins via condensation of Trp, Tyr, and Leu-derived precursors. N-methylation by imqF and phenol oxidation by imqC, followed by cyclization via the FAD-dependent oxidase imqH carry out the three-step transformation of L-tyrosine into tetrahydroisoquinoline. Importantly, this sequence requires the presence of a free amine in the tyrosine moiety, indicating that isoquinoline formation occurs prior to peptide bond formation. The imidazolidin-4-one ring of imizoquins could form following additional oxidation of the methyl-derived bridgehead carbon by imqH. Lastly, O-methylation by imqG and leucine hydroxylation by imqE complete biosynthesis of the imizoquins. This chain is N-methyltransferase imqF, found in Aspergillus flavus (strain ATCC 200026 / FGSC A1120 / IAM 13836 / NRRL 3357 / JCM 12722 / SRRC 167).